Reading from the N-terminus, the 622-residue chain is Histone-arginine methyltransferase CARMER (622 aa).

The region spanning 118 to 425 (ASQYFQFYGY…QRQSYDVEID (308 aa)) is the SAM-dependent MTase PRMT-type domain. Residues glutamine 131, arginine 140, glycine 164, glutamate 186, glutamate 215, and threonine 243 each contribute to the S-adenosyl-L-methionine site. An Asymmetric dimethylarginine; by autocatalysis modification is found at arginine 478. Disordered stretches follow at residues 513–556 (ANGG…QQQQ) and 602–622 (QPILNSHHHHPGQPIHGNQFY). The segment covering 536–556 (QQQQQQQQQQQQAAVGPQQQQ) has biased composition (low complexity).

The protein belongs to the class I-like SAM-binding methyltransferase superfamily. Protein arginine N-methyltransferase family. Homodimer. In terms of processing, the dimethylated protein is the major form.

It is found in the cytoplasm. The protein resides in the nucleus. It carries out the reaction L-arginyl-[protein] + 2 S-adenosyl-L-methionine = N(omega),N(omega)-dimethyl-L-arginyl-[protein] + 2 S-adenosyl-L-homocysteine + 2 H(+). Its function is as follows. Methylates (mono- and asymmetric dimethylation) the guanidino nitrogens of arginyl residues in proteins. May methylate histone H3 at 'Arg-17' and activate transcription via chromatin remodeling. This chain is Histone-arginine methyltransferase CARMER, found in Anopheles gambiae (African malaria mosquito).